The primary structure comprises 185 residues: Large ribosomal subunit protein uL22 (185 aa).

Positions Ala158–Glu185 are disordered. Residues Lys167–Ala176 are compositionally biased toward basic residues.

Belongs to the universal ribosomal protein uL22 family.

The protein is Large ribosomal subunit protein uL22 (RpL17) of Diaphorina citri (Asian citrus psyllid).